We begin with the raw amino-acid sequence, 289 residues long: Probable ABC transporter permease protein BRA0749/BS1330_II0742 (289 aa).

6 consecutive transmembrane segments (helical) span residues 9–29 (FLIL…VVHL), 70–90 (VWTV…AIIL), 99–119 (VARV…AIVW), 144–166 (IQWL…LVTV), 213–233 (IAIV…WVMT), and 260–280 (EASA…VIYI). Residues 65-279 (LWRTAVWTVA…AILLVFTVIY (215 aa)) enclose the ABC transmembrane type-1 domain.

It belongs to the binding-protein-dependent transport system permease family. As to quaternary structure, the complex is composed of two ATP-binding proteins (BRA0745), two transmembrane proteins (BRA0749) and a solute-binding protein (BRA0748).

It localises to the cell inner membrane. Its function is as follows. Probably part of an ABC transporter complex. Probably responsible for the translocation of the substrate across the membrane. This is Probable ABC transporter permease protein BRA0749/BS1330_II0742 from Brucella suis biovar 1 (strain 1330).